A 496-amino-acid polypeptide reads, in one-letter code: Rhamnulokinase (496 aa).

13–17 serves as a coordination point for ATP; that stretch reads ASSGR. Substrate is bound by residues glycine 83 and 236-238; that span reads HDT. Aspartate 237 functions as the Proton acceptor in the catalytic mechanism. An ATP-binding site is contributed by threonine 259. Residue asparagine 296 participates in substrate binding. Glutamine 304 is an ATP binding site. A disulfide bridge connects residues cysteine 353 and cysteine 370. Glycine 402 is an ATP binding site. Cysteine 413 and cysteine 417 form a disulfide bridge.

The protein belongs to the rhamnulokinase family. The cofactor is Mg(2+).

The enzyme catalyses L-rhamnulose + ATP = L-rhamnulose 1-phosphate + ADP + H(+). It participates in carbohydrate degradation; L-rhamnose degradation; glycerone phosphate from L-rhamnose: step 2/3. Its function is as follows. Involved in the catabolism of L-rhamnose (6-deoxy-L-mannose). Catalyzes the transfer of the gamma-phosphate group from ATP to the 1-hydroxyl group of L-rhamnulose to yield L-rhamnulose 1-phosphate. The sequence is that of Rhamnulokinase from Pectobacterium atrosepticum (strain SCRI 1043 / ATCC BAA-672) (Erwinia carotovora subsp. atroseptica).